Here is a 268-residue protein sequence, read N- to C-terminus: uncharacterized protein (268 aa).

This is an uncharacterized protein from Schizosaccharomyces pombe (strain 972 / ATCC 24843) (Fission yeast).